The sequence spans 309 residues: Serine/threonine-protein phosphatase PP2A catalytic subunit (309 aa).

Mn(2+) is bound by residues Asp-57, His-59, Asp-85, and Asn-117. The active-site Proton donor is the His-118. Mn(2+) contacts are provided by His-167 and His-241.

This sequence belongs to the PPP phosphatase family. PP-2A subfamily. The cofactor is Mn(2+).

The enzyme catalyses O-phospho-L-seryl-[protein] + H2O = L-seryl-[protein] + phosphate. The catalysed reaction is O-phospho-L-threonyl-[protein] + H2O = L-threonyl-[protein] + phosphate. The chain is Serine/threonine-protein phosphatase PP2A catalytic subunit from Brassica napus (Rape).